The following is a 527-amino-acid chain: Amidophosphoribosyltransferase (527 aa).

A disordered region spans residues 1–30 (MAVDSDYVTDRAAGSRQTVTGQQPEQDLNS). Positions 1 to 34 (MAVDSDYVTDRAAGSRQTVTGQQPEQDLNSPREE) are excised as a propeptide. The span at 15–29 (SRQTVTGQQPEQDLN) shows a compositional bias: polar residues. Cys35 functions as the Nucleophile in the catalytic mechanism. The 227-residue stretch at 35–261 (CGVFGVWAPG…PGELLAIDAD (227 aa)) folds into the Glutamine amidotransferase type-2 domain. Cys276 provides a ligand contact to [4Fe-4S] cluster. Residues Ser323, Asp385, and Asp386 each contribute to the Mg(2+) site. [4Fe-4S] cluster is bound by residues Cys422, Cys478, and Cys481.

The protein in the C-terminal section; belongs to the purine/pyrimidine phosphoribosyltransferase family. Requires Mg(2+) as cofactor. The cofactor is [4Fe-4S] cluster.

It catalyses the reaction 5-phospho-beta-D-ribosylamine + L-glutamate + diphosphate = 5-phospho-alpha-D-ribose 1-diphosphate + L-glutamine + H2O. Its pathway is purine metabolism; IMP biosynthesis via de novo pathway; N(1)-(5-phospho-D-ribosyl)glycinamide from 5-phospho-alpha-D-ribose 1-diphosphate: step 1/2. Catalyzes the formation of phosphoribosylamine from phosphoribosylpyrophosphate (PRPP) and glutamine. The protein is Amidophosphoribosyltransferase of Mycobacterium bovis (strain ATCC BAA-935 / AF2122/97).